A 936-amino-acid polypeptide reads, in one-letter code: Translation initiation factor IF-2 (936 aa).

The disordered stretch occupies residues 102-332 (PEPGPVLKKD…SGSRQKFRKM (231 aa)). Basic and acidic residues predominate over residues 108-119 (LKKDHVHEEPEK). Residues 127–137 (SEPEVEPEVEP) are compositionally biased toward acidic residues. The span at 151–160 (PTEAVSVPEP) shows a compositional bias: low complexity. The segment covering 182–194 (QSSTMKAQASPEM) has biased composition (polar residues). Composition is skewed to basic and acidic residues over residues 217-227 (SALDRGSESDR) and 237-267 (KEQADELKGEFENAGKAEGDKKPAKSGEAKT). Low complexity predominate over residues 272–281 (KAAGTTGSAA). Basic residues predominate over residues 287–297 (SKKKKGGKKKK). Residues 433–603 (IRPPVVTIMG…LMEAEIRELK (171 aa)) enclose the tr-type G domain. The segment at 442 to 449 (GHVDHGKT) is G1. 442–449 (GHVDHGKT) serves as a coordination point for GTP. Residues 467 to 471 (GITQH) are G2. Residues 489–492 (DTPG) form a G3 region. GTP is bound by residues 489–493 (DTPGH) and 543–546 (NKID). Residues 543–546 (NKID) are G4. The segment at 579-581 (SAK) is G5.

Belongs to the TRAFAC class translation factor GTPase superfamily. Classic translation factor GTPase family. IF-2 subfamily.

It localises to the cytoplasm. In terms of biological role, one of the essential components for the initiation of protein synthesis. Protects formylmethionyl-tRNA from spontaneous hydrolysis and promotes its binding to the 30S ribosomal subunits. Also involved in the hydrolysis of GTP during the formation of the 70S ribosomal complex. This is Translation initiation factor IF-2 from Prosthecochloris aestuarii (strain DSM 271 / SK 413).